We begin with the raw amino-acid sequence, 1012 residues long: Structural polyprotein (1012 aa).

Aspartate 30 is an a divalent metal cation binding site. Residues 513–755 (ADKGYEVVAN…AGRQYDLAMA (243 aa)) form the Peptidase S50 domain. The active-site Nucleophile is the serine 652. Lysine 692 is an active-site residue. Positions 971–1012 (EMKHRNPRRAPPKPKPKPNVPTQRPPGRLGRWIRAVSDEDLE) are disordered. Positions 975–986 (RNPRRAPPKPKP) are enriched in basic residues. The interval 1003-1012 (IRAVSDEDLE) is interaction with VP1 protein.

Homotrimer. A central divalent metal stabilizes the VP2 trimer. Interacts with host ITGA4/ITGB1. As to quaternary structure, homodimer. Interacts (via C-terminus) with VP1 in the cytoplasm. Interacts with VP2. In terms of processing, specific enzymatic cleavages yield mature proteins. The capsid assembly seems to be regulated by polyprotein processing. The protease VP4 cleaves itself off the polyprotein, thus releasing pre-VP2 and VP3 within the infected cell. During capsid assembly, the C-terminus of pre-VP2 is further processed by VP4, giving rise to VP2, the external capsid protein and three small peptides that all stay closely associated with the capsid.

It is found in the virion. The protein resides in the host cytoplasm. In terms of biological role, capsid protein VP2 self assembles to form an icosahedral capsid with a T=13 symmetry, about 70 nm in diameter, and consisting of 260 VP2 trimers. The capsid encapsulates the genomic dsRNA. VP2 is also involved in attachment and entry into the host cell by interacting with host ITGA4/ITGB1. Functionally, the precursor of VP2 plays an important role in capsid assembly. First, pre-VP2 and VP2 oligomers assemble to form a procapsid. Then, the pre-VP2 intermediates may be processed into VP2 proteins by proteolytic cleavage mediated by VP4 to obtain the mature virion. The final capsid is composed of pentamers and hexamers but VP2 has a natural tendency to assemble into all-pentameric structures. Therefore pre-VP2 may be required to allow formation of the hexameric structures. Protease VP4 is a serine protease that cleaves the polyprotein into its final products. Pre-VP2 is first partially cleaved, and may be completely processed by VP4 upon capsid maturation. Its function is as follows. Capsid protein VP3 plays a key role in virion assembly by providing a scaffold for the capsid made of VP2. May self-assemble to form a T=4-like icosahedral inner-capsid composed of at least 180 trimers. Plays a role in genomic RNA packaging by recruiting VP1 into the capsid and interacting with the dsRNA genome segments to form a ribonucleoprotein complex. Additionally, the interaction of the VP3 C-terminal tail with VP1 removes the inherent structural blockade of the polymerase active site. Thus, VP3 can also function as a transcriptional activator. In terms of biological role, structural peptide 1 is a small peptide derived from pre-VP2 C-terminus. It destabilizes and perforates cell membranes, suggesting a role during entry. Functionally, structural peptide 2 is a small peptide derived from pre-VP2 C-terminus. It is not essential for the virus viability, but viral growth is affected when missing. Structural peptide 3 is a small peptide derived from pre-VP2 C-terminus. It is not essential for the virus viability, but viral growth is affected when missing. The polypeptide is Structural polyprotein (Avian infectious bursal disease virus (isolate Chicken/UK/UK661/1989) (IBDV)).